We begin with the raw amino-acid sequence, 300 residues long: Protoheme IX farnesyltransferase (300 aa).

Transmembrane regions (helical) follow at residues V24–V44, W46–I66, P94–F114, L118–L138, I146–G166, A172–L192, V224–L244, and I278–L298.

This sequence belongs to the UbiA prenyltransferase family. Protoheme IX farnesyltransferase subfamily.

The protein resides in the cell inner membrane. The enzyme catalyses heme b + (2E,6E)-farnesyl diphosphate + H2O = Fe(II)-heme o + diphosphate. It functions in the pathway porphyrin-containing compound metabolism; heme O biosynthesis; heme O from protoheme: step 1/1. Its function is as follows. Converts heme B (protoheme IX) to heme O by substitution of the vinyl group on carbon 2 of heme B porphyrin ring with a hydroxyethyl farnesyl side group. This is Protoheme IX farnesyltransferase from Burkholderia ambifaria (strain MC40-6).